A 231-amino-acid chain; its full sequence is Ribonuclease 3 (231 aa).

The RNase III domain occupies 7-135; it reads IQAIESKLNF…ILGAVYLDGG (129 aa). A Mg(2+)-binding site is contributed by Glu48. The active site involves Asp52. Asn121 and Glu124 together coordinate Mg(2+). Glu124 is a catalytic residue. Residues 160 to 229 form the DRBM domain; sequence NPKNRLQQFT…AKQALSTHDN (70 aa).

The protein belongs to the ribonuclease III family. In terms of assembly, homodimer. Requires Mg(2+) as cofactor.

The protein localises to the cytoplasm. It carries out the reaction Endonucleolytic cleavage to 5'-phosphomonoester.. Its function is as follows. Digests double-stranded RNA. Involved in the processing of primary rRNA transcript to yield the immediate precursors to the large and small rRNAs (23S and 16S). Processes some mRNAs, and tRNAs when they are encoded in the rRNA operon. Processes pre-crRNA and tracrRNA of type II CRISPR loci if present in the organism. In Chlamydia trachomatis serovar L2 (strain ATCC VR-902B / DSM 19102 / 434/Bu), this protein is Ribonuclease 3.